The following is a 210-amino-acid chain: Casparian strip membrane protein 4 (210 aa).

At methionine 1–glycine 48 the chain is on the cytoplasmic side. The helical transmembrane segment at valine 49 to alanine 69 threads the bilayer. Residues threonine 70–glutamine 98 are Extracellular-facing. The chain crosses the membrane as a helical span at residues phenylalanine 99 to isoleucine 119. Residues valine 120–arginine 131 are Cytoplasmic-facing. Residues leucine 132–alanine 152 form a helical membrane-spanning segment. The Extracellular portion of the chain corresponds to threonine 153–glycine 184. A helical membrane pass occupies residues alanine 185 to valine 205. Residues alanine 206–histidine 210 are Cytoplasmic-facing.

The protein belongs to the Casparian strip membrane proteins (CASP) family. Homodimer and heterodimers.

It localises to the cell membrane. Regulates membrane-cell wall junctions and localized cell wall deposition. Required for establishment of the Casparian strip membrane domain (CSD) and the subsequent formation of Casparian strips, a cell wall modification of the root endodermis that determines an apoplastic barrier between the intraorganismal apoplasm and the extraorganismal apoplasm and prevents lateral diffusion. This Glycine max (Soybean) protein is Casparian strip membrane protein 4.